We begin with the raw amino-acid sequence, 330 residues long: Phenylalanine--tRNA ligase alpha subunit (330 aa).

A Mg(2+)-binding site is contributed by glutamate 257.

The protein belongs to the class-II aminoacyl-tRNA synthetase family. Phe-tRNA synthetase alpha subunit type 1 subfamily. Tetramer of two alpha and two beta subunits. Mg(2+) is required as a cofactor.

The protein resides in the cytoplasm. It catalyses the reaction tRNA(Phe) + L-phenylalanine + ATP = L-phenylalanyl-tRNA(Phe) + AMP + diphosphate + H(+). The chain is Phenylalanine--tRNA ligase alpha subunit from Acaryochloris marina (strain MBIC 11017).